The following is a 736-amino-acid chain: Catalase-peroxidase (736 aa).

A disordered region spans residues 1 to 21; the sequence is MSNEQKCPFSGTHGARTTVGT. Residues 96-224 constitute a cross-link (tryptophyl-tyrosyl-methioninium (Trp-Tyr) (with M-250)); the sequence is WHSAGTYRTG…LAAVQMGLIY (129 aa). H97 acts as the Proton acceptor in catalysis. The segment at residues 224–250 is a cross-link (tryptophyl-tyrosyl-methioninium (Tyr-Met) (with W-96)); sequence YVNPEGPDGNPDPVASGRDIRETFARM. Heme b is bound at residue H265.

It belongs to the peroxidase family. Peroxidase/catalase subfamily. Homodimer or homotetramer. Requires heme b as cofactor. Formation of the three residue Trp-Tyr-Met cross-link is important for the catalase, but not the peroxidase activity of the enzyme.

It catalyses the reaction H2O2 + AH2 = A + 2 H2O. The enzyme catalyses 2 H2O2 = O2 + 2 H2O. Functionally, bifunctional enzyme with both catalase and broad-spectrum peroxidase activity. The polypeptide is Catalase-peroxidase (Dechloromonas aromatica (strain RCB)).